The following is a 533-amino-acid chain: (E)-beta-farnesene synthase (533 aa).

Asp286, Asp290, Asn430, Ser434, and Glu438 together coordinate Mg(2+). Positions Asp286–Asp290 match the DDXXD motif motif.

It belongs to the terpene synthase family. Mg(2+) is required as a cofactor. Co(2+) serves as cofactor. Requires Mn(2+) as cofactor.

Its subcellular location is the cytoplasm. It carries out the reaction (2E,6E)-farnesyl diphosphate = (E)-beta-farnesene + diphosphate. The protein operates within secondary metabolite biosynthesis; terpenoid biosynthesis. Its function is as follows. Sesquiterpene cyclase catalyzing the production of sixfold more beta-farnesene than alpha-bergamotene from farnesyl diphosphate. Involved in indirect defense by producing volatile signals attracting natural enemies of herbivores. In Zea perennis (Perennial teosinte), this protein is (E)-beta-farnesene synthase.